The chain runs to 413 residues: N5-carboxyaminoimidazole ribonucleotide synthase (413 aa).

The interval 1 to 21 (MKRVSEQAGNPDGNPQAHVPG) is disordered. ATP is bound by residues Lys122, Lys162, 199–202 (EEKV), Glu207, and 289–290 (NE). Residues 126-319 (RERLAELGAP…QFEQHLRAVM (194 aa)) enclose the ATP-grasp domain.

The protein belongs to the PurK/PurT family. As to quaternary structure, homodimer.

It catalyses the reaction 5-amino-1-(5-phospho-beta-D-ribosyl)imidazole + hydrogencarbonate + ATP = 5-carboxyamino-1-(5-phospho-D-ribosyl)imidazole + ADP + phosphate + 2 H(+). The protein operates within purine metabolism; IMP biosynthesis via de novo pathway; 5-amino-1-(5-phospho-D-ribosyl)imidazole-4-carboxylate from 5-amino-1-(5-phospho-D-ribosyl)imidazole (N5-CAIR route): step 1/2. In terms of biological role, catalyzes the ATP-dependent conversion of 5-aminoimidazole ribonucleotide (AIR) and HCO(3)(-) to N5-carboxyaminoimidazole ribonucleotide (N5-CAIR). The polypeptide is N5-carboxyaminoimidazole ribonucleotide synthase (Corynebacterium ammoniagenes (Brevibacterium ammoniagenes)).